Consider the following 232-residue polypeptide: MSSDIHQIKIGLTDNHPCSYLPERKERVAVALEADMHTADNYEVLLANGFRRSGNTIYKPHCDSCHSCQPIRISVPDIELSRSQKRLLAKARSLSWSMKRNMDENWFDLYSRYIVARHRNGTMYPPKKDDFAHFSRNQWLTTQFLHIYEGQRLIAVAVTDIMDHCASAFYTFFEPEHELSLGTLAVLFQLEFCQEEKKQWLYLGYQIDECPAMNYKVRFHRHQKLVNQRWQG.

This sequence belongs to the R-transferase family. Bpt subfamily.

The protein resides in the cytoplasm. The catalysed reaction is N-terminal L-glutamyl-[protein] + L-leucyl-tRNA(Leu) = N-terminal L-leucyl-L-glutamyl-[protein] + tRNA(Leu) + H(+). It carries out the reaction N-terminal L-aspartyl-[protein] + L-leucyl-tRNA(Leu) = N-terminal L-leucyl-L-aspartyl-[protein] + tRNA(Leu) + H(+). Functionally, functions in the N-end rule pathway of protein degradation where it conjugates Leu from its aminoacyl-tRNA to the N-termini of proteins containing an N-terminal aspartate or glutamate. The sequence is that of Aspartate/glutamate leucyltransferase from Vibrio vulnificus (strain CMCP6).